Here is a 970-residue protein sequence, read N- to C-terminus: uncharacterized protein (970 aa).

A helical transmembrane segment spans residues 11–31 (WILKIGTILGLVCLGLFGVIF). The tract at residues 366 to 387 (ASNSNDNNNQNNNNNNNSSDVI) is disordered. Low complexity predominate over residues 367–387 (SNSNDNNNQNNNNNNNSSDVI). A run of 11 helical transmembrane segments spans residues 515-535 (FASS…LLTL), 537-557 (YKLL…SSLV), 558-578 (IFSA…FFVI), 614-634 (FFAN…VIYL), 645-665 (LMAI…IVLI), 726-746 (FLFV…LYLV), 762-782 (SNGI…YCLI), 789-809 (CLSY…VMYL), 816-836 (IDQS…FFAA), 877-897 (IESS…FGGI), and 903-923 (LVIF…AFLP).

The protein resides in the cell membrane. This is an uncharacterized protein from Mycoplasma genitalium (strain ATCC 33530 / DSM 19775 / NCTC 10195 / G37) (Mycoplasmoides genitalium).